The primary structure comprises 787 residues: Aconitate hydratase, mitochondrial (787 aa).

The N-terminal 33 residues, 1 to 33 (MISTRLARAGALAPKSRLFLGTRAFATVGDSPL), are a transit peptide targeting the mitochondrion. Substrate contacts are provided by residues Gln104 and 197–199 (DSH). Positions 390, 453, and 456 each coordinate [4Fe-4S] cluster. Substrate is bound by residues Arg479 and Arg484. The interval 529-559 (LQPPTGEGLPAKGYDPGRDTYQAPPADRSSV) is disordered. Residues Arg612 and 675–676 (SR) contribute to the substrate site.

This sequence belongs to the aconitase/IPM isomerase family. [4Fe-4S] cluster is required as a cofactor.

It localises to the mitochondrion. It carries out the reaction citrate = D-threo-isocitrate. It catalyses the reaction (2R)-homocitrate = cis-homoaconitate + H2O. Its pathway is carbohydrate metabolism; tricarboxylic acid cycle; isocitrate from oxaloacetate: step 2/2. The protein operates within amino-acid biosynthesis; L-lysine biosynthesis via AAA pathway; L-alpha-aminoadipate from 2-oxoglutarate: step 2/5. In terms of biological role, catalyzes the isomerization of citrate to isocitrate via cis-aconitate, a step in the citric acid cycle. Also catalyzes the reversible dehydration of (R)-homocitrate to cis-homoaconitate, a step in the alpha-aminoadipate pathway for lysine biosynthesis. In Aspergillus fumigatus (strain ATCC MYA-4609 / CBS 101355 / FGSC A1100 / Af293) (Neosartorya fumigata), this protein is Aconitate hydratase, mitochondrial (acoA).